A 623-amino-acid chain; its full sequence is Calnexin (623 aa).

The first 21 residues, 1–21 (MLNRKWSFVFLTFLLVISVNA), serve as a signal peptide directing secretion. Residue aspartate 108 participates in Ca(2+) binding. The cysteines at positions 151 and 185 are disulfide-linked. An alpha-D-glucoside is bound by residues tyrosine 155, lysine 157, tyrosine 176, and aspartate 183. Asparagine 202 carries N-linked (GlcNAc...) asparagine glycosylation. A disordered region spans residues 260-337 (SLTPPKEIFD…QKPQDWDEDM (78 aa)). Positions 266 to 276 (EIFDETDLKPE) are enriched in basic and acidic residues. The tract at residues 267–400 (IFDETDLKPE…RLIDNPNYFE (134 aa)) is p domain (Extended arm). 5 tandem repeats follow at residues 269–281 (DETD…WDER), 286–298 (DETA…WDEN), 305–317 (DESA…WNEE), 324–336 (DPEA…WDED), and 339–349 (GSWEAPLIDNP). 2 4 X approximate repeats regions span residues 269 to 336 (DETD…WDED) and 339 to 396 (GSWE…IDNP). Acidic residues-rich tracts occupy residues 277–287 (DWDEREQIEDE) and 314–323 (WNEEENELIP). A disulfide bridge links cysteine 351 with cysteine 357. Tandem repeats lie at residues 358–368 (GTWKPPTIKNP), 372–382 (GKWVRPKIANP), and 386–396 (GKWSPRLIDNP). Glutamate 416 contributes to the an alpha-D-glucoside binding site. Aspartate 427 lines the Ca(2+) pocket. A helical membrane pass occupies residues 480 to 500 (LWAVYILCILLPLIAIGVFCF). The tract at residues 536–623 (IAEDEEDNQP…AKRRTARRGD (88 aa)) is disordered. The span at 556 to 565 (IDEDEQDEVE) shows a compositional bias: acidic residues. Over residues 566–581 (QQPSSSKTASSESSSA) the composition is skewed to low complexity. The span at 614–623 (AKRRTARRGD) shows a compositional bias: basic residues.

The protein belongs to the calreticulin family. Post-translationally, glycosylation is important for its biological activity.

Its subcellular location is the endoplasmic reticulum membrane. It localises to the cytoplasm. It is found in the perinuclear region. The protein localises to the cytoplasmic vesicle. Its function is as follows. Calcium-binding protein that interacts with newly synthesized monoglucosylated glycoproteins in the endoplasmic reticulum. It may act in assisting protein assembly and/or in the retention within the ER of unassembled protein subunits. It seems to play a major role in the quality control apparatus of the ER by the retention of incorrectly folded proteins. Required for embryogenesis and larval development under heat and ER stress conditions. May be important for germ cell development. Involved in neuronal necrotic cell death. The sequence is that of Calnexin from Caenorhabditis briggsae.